Reading from the N-terminus, the 225-residue chain is Heptaprenylglyceryl phosphate synthase (225 aa).

A sn-glycerol 1-phosphate-binding site is contributed by K6. D8 and T34 together coordinate Mg(2+). Sn-glycerol 1-phosphate is bound by residues 153–158, G183, and 203–204; these read YVEYSG and GN.

The protein belongs to the GGGP/HepGP synthase family. Group I subfamily. In terms of assembly, homodimer. It depends on Mg(2+) as a cofactor.

The catalysed reaction is sn-glycerol 1-phosphate + all-trans-heptaprenyl diphosphate = 3-heptaprenyl-sn-glycero-1-phosphate + diphosphate. It participates in membrane lipid metabolism; glycerophospholipid metabolism. Prenyltransferase that catalyzes in vivo the transfer of the heptaprenyl moiety of heptaprenyl pyrophosphate (HepPP; 35 carbon atoms) to the C3 hydroxyl of sn-glycerol-1-phosphate (G1P), producing heptaprenylglyceryl phosphate (HepGP). This reaction is an ether-bond-formation step in the biosynthesis of archaea-type G1P-based membrane lipids found in Bacillales. To a much lesser extent, is also able to use geranylgeranyl diphosphate (GGPP; C20) as the prenyl donor. In Listeria monocytogenes serovar 1/2a (strain ATCC BAA-679 / EGD-e), this protein is Heptaprenylglyceryl phosphate synthase.